Reading from the N-terminus, the 525-residue chain is Cysteine--tRNA ligase (525 aa).

Position 49 (C49) interacts with Zn(2+). The 'HIGH' region signature appears at 51–61; sequence VTVYDLCHLGH. Residues C258, H283, and E287 each contribute to the Zn(2+) site. The short motif at 315 to 319 is the 'KMSKS' region element; the sequence is KMSKS. ATP is bound at residue K318.

It belongs to the class-I aminoacyl-tRNA synthetase family. In terms of assembly, monomer. It depends on Zn(2+) as a cofactor.

The protein localises to the cytoplasm. It catalyses the reaction tRNA(Cys) + L-cysteine + ATP = L-cysteinyl-tRNA(Cys) + AMP + diphosphate. The polypeptide is Cysteine--tRNA ligase (Synechococcus sp. (strain JA-2-3B'a(2-13)) (Cyanobacteria bacterium Yellowstone B-Prime)).